The primary structure comprises 544 residues: Chaperonin GroEL 2 (544 aa).

ATP-binding positions include 29–32, 86–90, glycine 413, and aspartate 495; these read TLGP and DGTTT. Positions 525–544 are disordered; that stretch reads PEPKSNKPAGGGGGVDDYDY. Positions 533–544 are enriched in gly residues; sequence AGGGGGVDDYDY.

This sequence belongs to the chaperonin (HSP60) family. In terms of assembly, forms a cylinder of 14 subunits composed of two heptameric rings stacked back-to-back. Interacts with the co-chaperonin GroES.

It is found in the cytoplasm. The catalysed reaction is ATP + H2O + a folded polypeptide = ADP + phosphate + an unfolded polypeptide.. In terms of biological role, together with its co-chaperonin GroES, plays an essential role in assisting protein folding. The GroEL-GroES system forms a nano-cage that allows encapsulation of the non-native substrate proteins and provides a physical environment optimized to promote and accelerate protein folding. The polypeptide is Chaperonin GroEL 2 (Synechococcus sp. (strain JA-3-3Ab) (Cyanobacteria bacterium Yellowstone A-Prime)).